We begin with the raw amino-acid sequence, 321 residues long: Beta-ketoacyl-[acyl-carrier-protein] synthase III (321 aa).

Catalysis depends on residues cysteine 115 and histidine 248. Residues 249-253 (QANIR) form an ACP-binding region. Asparagine 278 is an active-site residue.

This sequence belongs to the thiolase-like superfamily. FabH family. As to quaternary structure, homodimer.

The protein localises to the cytoplasm. The enzyme catalyses malonyl-[ACP] + acetyl-CoA + H(+) = 3-oxobutanoyl-[ACP] + CO2 + CoA. Its pathway is lipid metabolism; fatty acid biosynthesis. Its function is as follows. Catalyzes the condensation reaction of fatty acid synthesis by the addition to an acyl acceptor of two carbons from malonyl-ACP. Catalyzes the first condensation reaction which initiates fatty acid synthesis and may therefore play a role in governing the total rate of fatty acid production. Possesses both acetoacetyl-ACP synthase and acetyl transacylase activities. Its substrate specificity determines the biosynthesis of branched-chain and/or straight-chain of fatty acids. In Azoarcus sp. (strain BH72), this protein is Beta-ketoacyl-[acyl-carrier-protein] synthase III.